Consider the following 500-residue polypeptide: MLTGVLQDWVWEAGETANESCPVGSLRTASAVNSCHQGRIPLFTVGVESTKQVQEAVRFARKHNLRLVIRNTGHDLAGRSSAPDSFQIHTHHLQEIQFHADMRLDGSNTSLGPAVTVGAGVMMGNLYAQAARHGYMVLGGDCPTVGVVGGFLQGGGISDFLSLNQGFGVDNVLEYEVVTADGELVVANALQNQDLFWALRGGGGGTFGVVTRATMRVFPDVPVVISEILLEAPQAISSSWTQGLSIVLTALQSLNRDNVGGQLVIAVLPKLAVQASIKFFFLDATEATVIDRRMKPFLTKLSRANVKYTYSSKNLPHFSSNYRQVPDIHSDNDYGVLGSTVAISQQLFDSPQGPEKVATALANLPVSAGDLIFTSNLGGRVISNGELAETSMHPAWRSASQLINYVHTVEPSIEGRAKARERLTNTQMPMLYALDPNLKLSYRNVGDPNEKDFQQIYWGPNYGRLSNIKKKWDTDDLFFSKLGVGSERWDSEEQLCLLHA.

Residues 37–220 (QGRIPLFTVG…TRATMRVFPD (184 aa)) form the FAD-binding PCMH-type domain.

This sequence belongs to the oxygen-dependent FAD-linked oxidoreductase family. It depends on FAD as a cofactor.

The protein operates within alkaloid biosynthesis; ergot alkaloid biosynthesis. Functionally, FAD-linked oxidoreductase; part of the gene cluster that mediates the biosynthesis of fungal ergot alkaloid. DmaW catalyzes the first step of ergot alkaloid biosynthesis by condensing dimethylallyl diphosphate (DMAP) and tryptophan to form 4-dimethylallyl-L-tryptophan. The second step is catalyzed by the methyltransferase easF that methylates 4-dimethylallyl-L-tryptophan in the presence of S-adenosyl-L-methionine, resulting in the formation of 4-dimethylallyl-L-abrine. The catalase easC and the FAD-dependent oxidoreductase easE then transform 4-dimethylallyl-L-abrine to chanoclavine-I which is further oxidized by easD in the presence of NAD(+), resulting in the formation of chanoclavine-I aldehyde. Chanoclavine-I aldehyde is the precursor of ergoamides and ergopeptines in Clavicipitaceae, and clavine-type alcaloids such as fumiclavine in Trichocomaceae. However, the metabolites downstream of chanoclavine-I aldehyde in Arthrodermataceae have not been identified yet. The chain is FAD-linked oxidoreductase easE from Arthroderma benhamiae (strain ATCC MYA-4681 / CBS 112371) (Trichophyton mentagrophytes).